A 77-amino-acid polypeptide reads, in one-letter code: ATP synthase subunit c (77 aa).

2 helical membrane passes run 13–33 (IATVGYGLAAIGPGIGVGIVA) and 55–75 (FLGIAFSEALALIGLATYFIF).

This sequence belongs to the ATPase C chain family. In terms of assembly, F-type ATPases have 2 components, F(1) - the catalytic core - and F(0) - the membrane proton channel. F(1) has five subunits: alpha(3), beta(3), gamma(1), delta(1), epsilon(1). F(0) has three main subunits: a(1), b(2) and c(10-14). The alpha and beta chains form an alternating ring which encloses part of the gamma chain. F(1) is attached to F(0) by a central stalk formed by the gamma and epsilon chains, while a peripheral stalk is formed by the delta and b chains.

It localises to the cell membrane. Functionally, f(1)F(0) ATP synthase produces ATP from ADP in the presence of a proton or sodium gradient. F-type ATPases consist of two structural domains, F(1) containing the extramembraneous catalytic core and F(0) containing the membrane proton channel, linked together by a central stalk and a peripheral stalk. During catalysis, ATP synthesis in the catalytic domain of F(1) is coupled via a rotary mechanism of the central stalk subunits to proton translocation. Its function is as follows. Key component of the F(0) channel; it plays a direct role in translocation across the membrane. A homomeric c-ring of between 10-14 subunits forms the central stalk rotor element with the F(1) delta and epsilon subunits. In Clavibacter michiganensis subsp. michiganensis (strain NCPPB 382), this protein is ATP synthase subunit c.